Here is a 530-residue protein sequence, read N- to C-terminus: Autoinducer-2 kinase (530 aa).

This sequence belongs to the FGGY kinase family.

It localises to the cytoplasm. It carries out the reaction (S)-4,5-dihydroxypentane-2,3-dione + ATP = (2S)-2-hydroxy-3,4-dioxopentyl phosphate + ADP + H(+). Functionally, catalyzes the phosphorylation of autoinducer-2 (AI-2) to phospho-AI-2, which subsequently inactivates the transcriptional regulator LsrR and leads to the transcription of the lsr operon. Phosphorylates the ring-open form of (S)-4,5-dihydroxypentane-2,3-dione (DPD), which is the precursor to all AI-2 signaling molecules, at the C5 position. This is Autoinducer-2 kinase from Escherichia coli (strain K12 / DH10B).